The sequence spans 338 residues: Flap endonuclease 1 (338 aa).

Positions 1–98 (MGTDIGDLLL…DTLAKRHEVR (98 aa)) are N-domain. The Mg(2+) site is built by D27, D80, E152, E154, D173, D175, and D236. Residues 116-257 (EAYKYAQASS…RALKLVKEHG (142 aa)) are I-domain. Positions 330 to 338 (SQSTLDQWF) are interaction with PCNA.

This sequence belongs to the XPG/RAD2 endonuclease family. FEN1 subfamily. As to quaternary structure, interacts with PCNA. PCNA stimulates the nuclease activity without altering cleavage specificity. Mg(2+) serves as cofactor.

Functionally, structure-specific nuclease with 5'-flap endonuclease and 5'-3' exonuclease activities involved in DNA replication and repair. During DNA replication, cleaves the 5'-overhanging flap structure that is generated by displacement synthesis when DNA polymerase encounters the 5'-end of a downstream Okazaki fragment. Binds the unpaired 3'-DNA end and kinks the DNA to facilitate 5' cleavage specificity. Cleaves one nucleotide into the double-stranded DNA from the junction in flap DNA, leaving a nick for ligation. Also involved in the base excision repair (BER) pathway. Acts as a genome stabilization factor that prevents flaps from equilibrating into structures that lead to duplications and deletions. Also possesses 5'-3' exonuclease activity on nicked or gapped double-stranded DNA. This Methanococcoides burtonii (strain DSM 6242 / NBRC 107633 / OCM 468 / ACE-M) protein is Flap endonuclease 1.